Reading from the N-terminus, the 588-residue chain is Cation channel sperm-associated protein 2 (588 aa).

Residues 1-106 (MAQEQGHFQL…LWAGWVLDSS (106 aa)) lie on the Cytoplasmic side of the membrane. The chain crosses the membrane as a helical span at residues 107-129 (VFSKFIISLIFLNTFVLMVEIEL). Over 130-138 (MESTNTALW) the chain is Extracellular. A helical membrane pass occupies residues 139–164 (PVKLALEVADWFILLSFIVEILLMWL). Residues 165 to 173 (ASFSLFWKD) lie on the Cytoplasmic side of the membrane. The helical transmembrane segment at 174–198 (AWNVFDFFVTLLSLLPELVVLLGVP) threads the bilayer. At 199–201 (AHS) the chain is on the extracellular side. A helical membrane pass occupies residues 202 to 220 (VWLQLLRVCRVLRSLKLFA). Residues 221–237 (RFRQIKVILLALVRALK) lie on the Cytoplasmic side of the membrane. The chain crosses the membrane as a helical span at residues 238–260 (SMTFLLMLLLIFFYIFAVTGVYF). The Extracellular segment spans residues 261–279 (FREYSRSTIEGLEYNMFFS). The segment at residues 280-292 (DLLNSLVTVFILF) is an intramembrane region (helical; Pore-forming). The Extracellular segment spans residues 293–312 (TLDHWYAVLQDIWKVPESSR). The helical transmembrane segment at 313 to 339 (VFSSIYVILWLLLGSIIFRNIIVAMMV) threads the bilayer. Topologically, residues 340-588 (TNFQNIRSEL…VQALMSFEDK (249 aa)) are cytoplasmic. A disordered region spans residues 376–512 (SESLRGTSLG…YPVSHSISSH (137 aa)). Over residues 390–439 (DIIETSDASDDDDDDDDDDDDDDDDDDDKSDATESDNEESDSENSESENS) the composition is skewed to acidic residues. Basic and acidic residues predominate over residues 440-502 (ESEKIDPEKD…KVKEESKEKA (63 aa)).

The protein belongs to the cation channel sperm-associated (TC 1.A.1.19) family. As to quaternary structure, component of the CatSper complex or CatSpermasome composed of the core pore-forming members CATSPER1, CATSPER2, CATSPER3 and CATSPER4 as well as auxiliary members CATSPERB, CATSPERG2, CATSPERD, CATSPERE, CATSPERZ, C2CD6/CATSPERT, SLCO6C1, TMEM249, TMEM262 and EFCAB9. HSPA1 may be an additional auxiliary complex member. The core complex members CATSPER1, CATSPER2, CATSPER3 and CATSPER4 form a heterotetrameric channel. The auxiliary CATSPERB, CATSPERG2, CATSPERD and CATSPERE subunits form a pavilion-like structure over the pore which stabilizes the complex through interactions with CATSPER4, CATSPER3, CATSPER1 and CATSPER2 respectively. SLCO6C1 interacts with CATSPERE and TMEM262/CATSPERH interacts with CATSPERB, further stabilizing the complex. C2CD6/CATSPERT interacts at least with CATSPERD and is required for targeting the CatSper complex in the flagellar membrane. Interacts with Ca(v)3.3/CACNA1I, leading to suppression of T-type calcium channel activity. As to expression, testis-specific.

It is found in the cell projection. Its subcellular location is the cilium. The protein resides in the flagellum membrane. The catalysed reaction is Ca(2+)(in) = Ca(2+)(out). In contrast to the human ortholog, not activated by progesterone. Activated by intracellular alkalinization. Pore-forming subunit of the CatSper complex, a sperm-specific voltage-gated calcium channel that plays a central role in sperm cell hyperactivation. Controls calcium entry to mediate the hyperactivated motility, a step needed for sperm motility which is essential late in the preparation of sperm for fertilization. This chain is Cation channel sperm-associated protein 2 (Catsper2), found in Mus musculus (Mouse).